A 1039-amino-acid chain; its full sequence is Isoleucine--tRNA ligase (1039 aa).

The 'HIGH' region signature appears at proline 46–threonine 56. The 'KMSKS' region motif lies at lysine 600–serine 604. Residue lysine 603 participates in ATP binding.

The protein belongs to the class-I aminoacyl-tRNA synthetase family. IleS type 2 subfamily. In terms of assembly, monomer. It depends on Zn(2+) as a cofactor.

It is found in the cytoplasm. It catalyses the reaction tRNA(Ile) + L-isoleucine + ATP = L-isoleucyl-tRNA(Ile) + AMP + diphosphate. In terms of biological role, catalyzes the attachment of isoleucine to tRNA(Ile). As IleRS can inadvertently accommodate and process structurally similar amino acids such as valine, to avoid such errors it has two additional distinct tRNA(Ile)-dependent editing activities. One activity is designated as 'pretransfer' editing and involves the hydrolysis of activated Val-AMP. The other activity is designated 'posttransfer' editing and involves deacylation of mischarged Val-tRNA(Ile). The chain is Isoleucine--tRNA ligase from Methanocaldococcus jannaschii (strain ATCC 43067 / DSM 2661 / JAL-1 / JCM 10045 / NBRC 100440) (Methanococcus jannaschii).